We begin with the raw amino-acid sequence, 128 residues long: Aspartate 1-decarboxylase (128 aa).

The Schiff-base intermediate with substrate; via pyruvic acid role is filled by serine 25. Serine 25 is modified (pyruvic acid (Ser)). Threonine 57 contributes to the substrate binding site. The active-site Proton donor is the tyrosine 58. Glycine 73–alanine 75 lines the substrate pocket.

It belongs to the PanD family. As to quaternary structure, heterooctamer of four alpha and four beta subunits. Pyruvate is required as a cofactor. Post-translationally, is synthesized initially as an inactive proenzyme, which is activated by self-cleavage at a specific serine bond to produce a beta-subunit with a hydroxyl group at its C-terminus and an alpha-subunit with a pyruvoyl group at its N-terminus.

It localises to the cytoplasm. The catalysed reaction is L-aspartate + H(+) = beta-alanine + CO2. Its pathway is cofactor biosynthesis; (R)-pantothenate biosynthesis; beta-alanine from L-aspartate: step 1/1. Functionally, catalyzes the pyruvoyl-dependent decarboxylation of aspartate to produce beta-alanine. In Burkholderia lata (strain ATCC 17760 / DSM 23089 / LMG 22485 / NCIMB 9086 / R18194 / 383), this protein is Aspartate 1-decarboxylase.